The chain runs to 311 residues: MVTWIRGEELHARTKEWARSHVKRLEEVGITPKLAVLLLNDDPVELETQRRFVTLKARDVREIGGEVEIYELYSAPPERRTKEALRLIESLNRRDDVTGVIIQKPLPPFVDEKALFSALSPEKDVDALTPENKKRLLTDFDLDRDVLPCTPAGILELFKLYGIDVRGKDVVVVGKGELVGKPLAVMLMQLDATVTVLHALSKEREPYVKRADIVISAVGRPPELYKDNPWRLTGDMIKEGAVVVGVGGKVDPATKRWFFDVDEKSVAEKASYLTPNIGGVGLATRARVLKNLIRTTYQVAQRVLSPRLYEV.

An NADP(+)-binding site is contributed by 174 to 176 (GKG).

It belongs to the tetrahydrofolate dehydrogenase/cyclohydrolase family. Homodimer.

It carries out the reaction (6R)-5,10-methylene-5,6,7,8-tetrahydrofolate + NADP(+) = (6R)-5,10-methenyltetrahydrofolate + NADPH. The catalysed reaction is (6R)-5,10-methenyltetrahydrofolate + H2O = (6R)-10-formyltetrahydrofolate + H(+). It participates in one-carbon metabolism; tetrahydrofolate interconversion. Functionally, catalyzes the oxidation of 5,10-methylenetetrahydrofolate to 5,10-methenyltetrahydrofolate and then the hydrolysis of 5,10-methenyltetrahydrofolate to 10-formyltetrahydrofolate. This chain is Bifunctional protein FolD, found in Pyrobaculum aerophilum (strain ATCC 51768 / DSM 7523 / JCM 9630 / CIP 104966 / NBRC 100827 / IM2).